Reading from the N-terminus, the 352-residue chain is C-C chemokine receptor type 5 (352 aa).

Over 1-30 (MDYQVSSPTYDIDYYTSGPCQKINVKQIAA) the chain is Extracellular. Sulfotyrosine is present on Tyr-3. 2 O-linked (GalNAc...) serine glycosylation sites follow: Ser-6 and Ser-7. Residues Tyr-10, Tyr-14, and Tyr-15 each carry the sulfotyrosine modification. Cystine bridges form between Cys-20–Cys-269 and Cys-101–Cys-178. A helical transmembrane segment spans residues 31–58 (RLLPPLYSLVFIFGFVGNMLVILILINC). Topologically, residues 59–68 (KRLKSMTDIY) are cytoplasmic. A helical transmembrane segment spans residues 69 to 89 (LLNLAISDLFFLLTVPFWAHY). Residues 90–102 (AAAQWDFGNTMCQ) are Extracellular-facing. A helical transmembrane segment spans residues 103–124 (LLTGLYFIGFFSGIFFIILLTI). The Cytoplasmic portion of the chain corresponds to 125–141 (DRYLAIVHAVFALKART). The helical transmembrane segment at 142 to 166 (VTFGVVTSVITWVVAVFASLPGIIF) threads the bilayer. At 167 to 198 (TRSQKEGLHYTCSSHFPYSQYQFWKNFQTLKI) the chain is on the extracellular side. The helical transmembrane segment at 199 to 218 (VILGLVLPLLVMVICYSGIL) threads the bilayer. Residues 219–235 (KTLLRCRNEKKRHRAVR) lie on the Cytoplasmic side of the membrane. Residues 236 to 260 (LIFTIMIVYFLFWAPYNIVLLLNTF) form a helical membrane-spanning segment. Topologically, residues 261-277 (QEFFGLNNCSSSNRLDQ) are extracellular. The chain crosses the membrane as a helical span at residues 278-301 (AMQVTETLGMTHCCINPIIYAFVG). Residues 302–352 (EKFRNYLLVFFQKHIAKHFCKCCSIFQQEAPERASSVYTRSTGEQEISVGL) are Cytoplasmic-facing. 3 S-palmitoyl cysteine lipidation sites follow: Cys-321, Cys-323, and Cys-324. Ser-336, Ser-337, Ser-342, and Ser-349 each carry phosphoserine; by BARK1.

The protein belongs to the G-protein coupled receptor 1 family. Interacts with PRAF2. Efficient ligand binding to CCL3/MIP-1alpha and CCL4/MIP-1beta requires sulfation, O-glycosylation and sialic acid modifications. Glycosylation on Ser-6 is required for efficient binding of CCL4. Interacts with GRK2. Interacts with ARRB1 and ARRB2. Interacts with CNIH4. Interacts with S100A4; this interaction stimulates T-lymphocyte chemotaxis. Sulfated on at least 2 of the N-terminal tyrosines. Sulfation is required for efficient binding of the chemokines, CCL3 and CCL4. Post-translationally, palmitoylation in the C-terminal is important for cell surface expression. In terms of processing, phosphorylation on serine residues in the C-terminal is stimulated by binding CC chemokines especially by APO-RANTES. O-glycosylated, but not N-glycosylated. Ser-6 appears to be the major site even if Ser-7 may be also O-glycosylated. Also sialylated glycans present which contribute to chemokine binding. Thr-16 and Ser-17 may also be glycosylated and, if so, with small moieties such as a T-antigen.

It localises to the cell membrane. In terms of biological role, receptor for a number of inflammatory CC-chemokines including CCL3/MIP-1-alpha, CCL4/MIP-1-beta and RANTES and subsequently transduces a signal by increasing the intracellular calcium ion level. May play a role in the control of granulocytic lineage proliferation or differentiation. Participates in T-lymphocyte migration to the infection site by acting as a chemotactic receptor. In Hylobates moloch (Silvery gibbon), this protein is C-C chemokine receptor type 5 (CCR5).